The primary structure comprises 164 residues: FMN reductase (NADH) RutF (164 aa).

This sequence belongs to the non-flavoprotein flavin reductase family. RutF subfamily.

The enzyme catalyses FMNH2 + NAD(+) = FMN + NADH + 2 H(+). In terms of biological role, catalyzes the reduction of FMN to FMNH2 which is used to reduce pyrimidine by RutA via the Rut pathway. The sequence is that of FMN reductase (NADH) RutF from Escherichia coli O6:K15:H31 (strain 536 / UPEC).